The following is a 122-amino-acid chain: Probable DNA-directed RNA polymerase II subunit RPB11 (122 aa).

Belongs to the archaeal Rpo11/eukaryotic RPB11/RPC19 RNA polymerase subunit family. Component of the RNA polymerase II (Pol II) complex consisting of 12 subunits.

It localises to the nucleus. Functionally, DNA-dependent RNA polymerase catalyzes the transcription of DNA into RNA using the four ribonucleoside triphosphates as substrates. Component of RNA polymerase II which synthesizes mRNA precursors and many functional non-coding RNAs. Pol II is the central component of the basal RNA polymerase II transcription machinery. It is composed of mobile elements that move relative to each other. RPB11 is part of the core element with the central large cleft. The polypeptide is Probable DNA-directed RNA polymerase II subunit RPB11 (rpb-11) (Caenorhabditis elegans).